The sequence spans 500 residues: Lysine--tRNA ligase (500 aa).

Residues E410 and E417 each coordinate Mg(2+).

It belongs to the class-II aminoacyl-tRNA synthetase family. As to quaternary structure, homodimer. Requires Mg(2+) as cofactor.

The protein resides in the cytoplasm. The catalysed reaction is tRNA(Lys) + L-lysine + ATP = L-lysyl-tRNA(Lys) + AMP + diphosphate. This chain is Lysine--tRNA ligase, found in Shewanella piezotolerans (strain WP3 / JCM 13877).